Reading from the N-terminus, the 304-residue chain is Ribosomal RNA small subunit methyltransferase H (304 aa).

S-adenosyl-L-methionine is bound by residues 36–38 (GGH), Asp53, Phe79, Asp98, and Gln105.

This sequence belongs to the methyltransferase superfamily. RsmH family.

It localises to the cytoplasm. The enzyme catalyses cytidine(1402) in 16S rRNA + S-adenosyl-L-methionine = N(4)-methylcytidine(1402) in 16S rRNA + S-adenosyl-L-homocysteine + H(+). In terms of biological role, specifically methylates the N4 position of cytidine in position 1402 (C1402) of 16S rRNA. The sequence is that of Ribosomal RNA small subunit methyltransferase H from Myxococcus xanthus (strain DK1622).